Consider the following 267-residue polypeptide: 3-methyl-2-oxobutanoate hydroxymethyltransferase (267 aa).

Positions 46 and 85 each coordinate Mg(2+). Residues 46–47 (DS), aspartate 85, and lysine 115 each bind 3-methyl-2-oxobutanoate. Glutamate 117 serves as a coordination point for Mg(2+). The active-site Proton acceptor is glutamate 184.

The protein belongs to the PanB family. Homodecamer; pentamer of dimers. The cofactor is Mg(2+).

It is found in the cytoplasm. It catalyses the reaction 3-methyl-2-oxobutanoate + (6R)-5,10-methylene-5,6,7,8-tetrahydrofolate + H2O = 2-dehydropantoate + (6S)-5,6,7,8-tetrahydrofolate. It functions in the pathway cofactor biosynthesis; (R)-pantothenate biosynthesis; (R)-pantoate from 3-methyl-2-oxobutanoate: step 1/2. In terms of biological role, catalyzes the reversible reaction in which hydroxymethyl group from 5,10-methylenetetrahydrofolate is transferred onto alpha-ketoisovalerate to form ketopantoate. In Geobacter sulfurreducens (strain ATCC 51573 / DSM 12127 / PCA), this protein is 3-methyl-2-oxobutanoate hydroxymethyltransferase.